Here is a 238-residue protein sequence, read N- to C-terminus: ATP synthase subunit a (238 aa).

The next 6 membrane-spanning stretches (helical) occupy residues 18–38 (TTNL…VFAL), 76–96 (FGLY…IGLF), 114–134 (PIVT…SGVA), 150–170 (FKVW…TLGL), 188–208 (GIAF…ALIW), and 211–231 (FSVF…SVYI).

The protein belongs to the ATPase A chain family. F-type ATPases have 2 components, CF(1) - the catalytic core - and CF(0) - the membrane proton channel. CF(1) has five subunits: alpha(3), beta(3), gamma(1), delta(1), epsilon(1). CF(0) has three main subunits: a(1), b(2) and c(9-12). The alpha and beta chains form an alternating ring which encloses part of the gamma chain. CF(1) is attached to CF(0) by a central stalk formed by the gamma and epsilon chains, while a peripheral stalk is formed by the delta and b chains.

It is found in the cell membrane. Functionally, key component of the proton channel; it plays a direct role in the translocation of protons across the membrane. This is ATP synthase subunit a from Pediococcus pentosaceus (strain ATCC 25745 / CCUG 21536 / LMG 10740 / 183-1w).